We begin with the raw amino-acid sequence, 275 residues long: Penicillin-insensitive murein endopeptidase (275 aa).

Positions 1–19 are cleaved as a signal peptide; that stretch reads MKNWIVGMVALVTMVPVMA. Intrachain disulfides connect Cys-44–Cys-264, Cys-187–Cys-235, and Cys-216–Cys-223. Residues His-110, His-113, Asp-120, Asp-147, and His-211 each coordinate Zn(2+). Positions 227-262 are disordered; the sequence is DTPPPGDGCGAELESWFQPPPPSAKPGKTLPPPLPP. Over residues 244–262 the composition is skewed to pro residues; sequence QPPPPSAKPGKTLPPPLPP.

The protein belongs to the peptidase M74 family. Dimer. Zn(2+) is required as a cofactor.

It is found in the periplasm. Its function is as follows. Murein endopeptidase that cleaves the D-alanyl-meso-2,6-diamino-pimelyl amide bond that connects peptidoglycan strands. Likely plays a role in the removal of murein from the sacculus. This Yersinia pestis protein is Penicillin-insensitive murein endopeptidase.